The following is a 238-amino-acid chain: Probable transcriptional regulatory protein HH_1604 (238 aa).

The protein belongs to the TACO1 family.

Its subcellular location is the cytoplasm. The polypeptide is Probable transcriptional regulatory protein HH_1604 (Helicobacter hepaticus (strain ATCC 51449 / 3B1)).